The following is a 261-amino-acid chain: CD40 ligand (261 aa).

Topologically, residues 1 to 22 are cytoplasmic; that stretch reads MIETYSQPSPRSVAAGPPVSMK. A helical; Signal-anchor for type II membrane protein transmembrane segment spans residues 23 to 43; sequence IFMYLLTVFLITQMIGSALFA. At 44-240 the chain is on the extracellular side; that stretch reads AYLHRRLDKI…LQPGASVFVN (197 aa). A THD domain is found at 122–261; it reads IAAHVISEAS…GFTSFGLLKL (140 aa). Cysteines 178 and 218 form a disulfide. N240 carries N-linked (GlcNAc...) asparagine glycosylation.

Belongs to the tumor necrosis factor family. In terms of assembly, homotrimer. Interacts with CD28. CD40 ligand, soluble form: Exists as either a monomer or a homotrimer. Forms a ternary complex between CD40 and integrins for CD40-CD40LG signaling. Post-translationally, the soluble form derives from the membrane form by proteolytic processing.

Its subcellular location is the cell membrane. It localises to the cell surface. It is found in the secreted. In terms of biological role, cytokine that acts as a ligand to CD40/TNFRSF5. Costimulates T-cell proliferation and cytokine production. Its cross-linking on T-cells generates a costimulatory signal which enhances the production of IL4 and IL10 in conjunction with the TCR/CD3 ligation and CD28 costimulation. Induces the activation of NF-kappa-B. Induces the activation of kinases MAPK8 and PAK2 in T-cells. Mediates B-cell proliferation in the absence of co-stimulus as well as IgE production in the presence of IL4. Involved in immunoglobulin class switching. Its function is as follows. Acts as a ligand for integrins, specifically ITGA5:ITGB1 and ITGAV:ITGB3; both integrins and the CD40 receptor are required for activation of CD40-CD40LG signaling, which have cell-type dependent effects, such as B-cell activation, NF-kappa-B signaling and anti-apoptotic signaling. In Sus scrofa (Pig), this protein is CD40 ligand (CD40LG).